Reading from the N-terminus, the 356-residue chain is CLIP domain-containing serine protease C9 (356 aa).

Positions 49–94 constitute a Clip domain; sequence SCDTPQVIGGKCMNISLCDPAFVHSIAYQEHTPVCQQNAFYRVICC. 4 disulfides stabilise this stretch: C50–C93, C60–C83, C66–C94, and C139–C155. N62 carries N-linked (GlcNAc...) asparagine glycosylation. A Peptidase S1 domain is found at 109–351; the sequence is IMHGIEAEPG…YFGWIKETVS (243 aa). Active-site charge relay system residues include H154 and D194. The cysteines at positions 258 and 284 are disulfide-linked. N-linked (GlcNAc...) asparagine glycosylation occurs at N292. Cysteines 300 and 328 form a disulfide. Catalysis depends on S304, which acts as the Charge relay system.

It belongs to the peptidase S1 family. CLIP subfamily. As to quaternary structure, in the active form, heterodimer of a p12 subunit and a p30 subunit; disulfide-linked. Secreted as a full-length protein. Following bacterium E.coli infection, proteolytically cleaved into two chains, p12 and p30, which remain covalently linked.

Its subcellular location is the secreted. Probable serine protease which plays an essential role in the innate immune response against bacteria and protozoa infection by activating the melanization cascade. In the susceptible strain G3, appears to be dispensable for ookinete elimination which occurs by lysis. In Anopheles gambiae (African malaria mosquito), this protein is CLIP domain-containing serine protease C9.